A 321-amino-acid chain; its full sequence is Large ribosomal subunit protein uL3 (321 aa).

The protein belongs to the universal ribosomal protein uL3 family. As to quaternary structure, part of the 50S ribosomal subunit. Forms a cluster with proteins L14 and L24e.

In terms of biological role, one of the primary rRNA binding proteins, it binds directly near the 3'-end of the 23S rRNA, where it nucleates assembly of the 50S subunit. This chain is Large ribosomal subunit protein uL3, found in Nanoarchaeum equitans (strain Kin4-M).